The following is a 580-amino-acid chain: MHLSAVFNALLVSVLAAVLWKHVRLREHAATLEEELALSRQATEPAPALRIDYPKALQILMEGGTHMVCTGRTHTDRICRFKWLCYSNEAEEFIFFHGNTSVMLPNLGSRRFQPALLDLSTVEDHNTQYFNFVELPAAALRFMPKPVFVPDVALIANRFNPDNLMHVFHDDLLPLFYTLRQFPGLAHEARLFFMEGWGEGAHFDLYKLLSPKQPLLRAQLKTLGRLLCFSHAFVGLSKITTWYQYGFVQPQGPKANILVSGNEIRQFARFMTEKLNVSHTGVPLGEEYILVFSRTQNRLILNEAELLLALAQEFQMKTVTVSLEDHTFADVVRLVSNASMLVSMHGAQLVTTLFLPRGATVVELFPYAVNPDHYTPYKTLAMLPGMDLQYVAWRNMMPENTVTHPERPWDQGGITHLDRAEQARILQSREVPRHLCCRNPEWLFRIYQDTKVDIPSLIQTIRRVVKGRPGPRKQKWTVGLYPGKVREARCQASVHGASEARLTVSWQIPWNLKYLKVREVKYEVWLQEQGENTYVPYILALQNHTFTENIKPFTTYLVWVRCIFNKILLGPFADVLVCNT.

The Cytoplasmic portion of the chain corresponds to 1-4 (MHLS). The helical; Signal-anchor for type II membrane protein transmembrane segment at 5 to 25 (AVFNALLVSVLAAVLWKHVRL) threads the bilayer. The Lumenal segment spans residues 26-580 (REHAATLEEE…PFADVLVCNT (555 aa)). 2 N-linked (GlcNAc...) asparagine glycosylation sites follow: Asn-99 and Asn-276. Residues 488–580 (ARCQASVHGA…PFADVLVCNT (93 aa)) enclose the Fibronectin type-III domain.

It belongs to the glycosyltransferase 61 family. In terms of tissue distribution, highly expressed in the brain, muscle, heart, and kidney in both fetus and adult. In the brain, highest expression in the cortex and cerebellum. Highly expressed in the pancreas.

Its subcellular location is the endoplasmic reticulum membrane. The enzyme catalyses 3-O-(alpha-D-mannosyl)-L-threonyl-[protein] + UDP-N-acetyl-alpha-D-glucosamine = 3-O-(N-acetyl-beta-D-glucosaminyl-(1-&gt;4)-alpha-D-mannosyl)-L-threonyl-[protein] + UDP + H(+). Its pathway is protein modification; protein glycosylation. O-linked mannose beta-1,4-N-acetylglucosaminyltransferase that transfers UDP-N-acetyl-D-glucosamine to the 4-position of the mannose to generate N-acetyl-D-glucosamine-beta-1,4-O-D-mannosylprotein. Involved in the biosynthesis of the phosphorylated O-mannosyl trisaccharide (N-acetylgalactosamine-beta-3-N-acetylglucosamine-beta-4-(phosphate-6-)mannose), a carbohydrate structure present in alpha-dystroglycan (DAG1), which is required for binding laminin G-like domain-containing extracellular proteins with high affinity. This is Protein O-linked-mannose beta-1,4-N-acetylglucosaminyltransferase 2 (POMGNT2) from Homo sapiens (Human).